We begin with the raw amino-acid sequence, 390 residues long: S-adenosylmethionine synthase 1 (390 aa).

Glu-9 provides a ligand contact to Mg(2+). His-15 serves as a coordination point for ATP. K(+) is bound at residue Glu-43. L-methionine is bound by residues Glu-56 and Gln-99. ATP contacts are provided by residues 167-169 (DGK), 235-238 (SGRF), Asp-246, 252-253 (RK), Ala-269, Lys-273, and Lys-277. Residue Asp-246 coordinates L-methionine. Lys-277 is a binding site for L-methionine.

Belongs to the AdoMet synthase family. As to quaternary structure, homotetramer. The cofactor is Mn(2+). Mg(2+) serves as cofactor. Requires Co(2+) as cofactor. K(+) is required as a cofactor.

The protein resides in the cytoplasm. It catalyses the reaction L-methionine + ATP + H2O = S-adenosyl-L-methionine + phosphate + diphosphate. It participates in amino-acid biosynthesis; S-adenosyl-L-methionine biosynthesis; S-adenosyl-L-methionine from L-methionine: step 1/1. Functionally, catalyzes the formation of S-adenosylmethionine from methionine and ATP. The reaction comprises two steps that are both catalyzed by the same enzyme: formation of S-adenosylmethionine (AdoMet) and triphosphate, and subsequent hydrolysis of the triphosphate. This chain is S-adenosylmethionine synthase 1 (SAMS1), found in Nicotiana tabacum (Common tobacco).